The following is a 497-amino-acid chain: MTGTSNIPTHGKEHKDAPALLPLPAPNPHHTHAAHPGNPSHDRPPSRGKLFIKTHGCQMNEYDSAKMADVLTTTEALELTDNPEEADIILINTCSIREKAQEKVFSQLGRWRALKTSGRDVIIGVGGCVASQEGEAIVKRAPYVDLVFGPQTLHRLPDMIRARREQNRPQVDIRFPEIEKFDHLPTPRAEGPSAFVSIMEGCSKYCSFCVVPYTRGEEVSRPFEDVLTEIAHLATQGVREINLLGQNVNAYRGAMDPGPSNNTNPAPPPYADLGLLIRAIAQFESIGRIRFTTSHPLEFSDSLVEAYRDVPQLANHLHLPVQSGSDRILSAMKRGYTALEFKSKIRKLRAVRPDISISSDFIIGFPGESDTDFQKTMQLIEDIGFDQSFSFIYSRRPGTPASNLEDHTPDEIKRTRLEHLQKHINTYAADISKRMIGTVQTVLVEGPSKKNPNELTGKTENMRPVNFPGHPRLIGQFIDVHITEALSNSLRGRVHTN.

Residues 1-50 form a disordered region; it reads MTGTSNIPTHGKEHKDAPALLPLPAPNPHHTHAAHPGNPSHDRPPSRGKL. Residues 48–165 form the MTTase N-terminal domain; it reads GKLFIKTHGC…LPDMIRARRE (118 aa). [4Fe-4S] cluster contacts are provided by C57, C94, C128, C202, C206, and C209. The Radical SAM core domain maps to 188 to 430; sequence RAEGPSAFVS…QKHINTYAAD (243 aa). A TRAM domain is found at 433–496; the sequence is KRMIGTVQTV…SNSLRGRVHT (64 aa).

The protein belongs to the methylthiotransferase family. MiaB subfamily. As to quaternary structure, monomer. Requires [4Fe-4S] cluster as cofactor.

The protein localises to the cytoplasm. It catalyses the reaction N(6)-dimethylallyladenosine(37) in tRNA + (sulfur carrier)-SH + AH2 + 2 S-adenosyl-L-methionine = 2-methylsulfanyl-N(6)-dimethylallyladenosine(37) in tRNA + (sulfur carrier)-H + 5'-deoxyadenosine + L-methionine + A + S-adenosyl-L-homocysteine + 2 H(+). Catalyzes the methylthiolation of N6-(dimethylallyl)adenosine (i(6)A), leading to the formation of 2-methylthio-N6-(dimethylallyl)adenosine (ms(2)i(6)A) at position 37 in tRNAs that read codons beginning with uridine. The polypeptide is tRNA-2-methylthio-N(6)-dimethylallyladenosine synthase (Xylella fastidiosa (strain 9a5c)).